Here is an 806-residue protein sequence, read N- to C-terminus: Mitogen-activated protein kinase 7 (806 aa).

Positions 1–23 (MAEPLKEEDGEDGSGEPPGRVKA) are disordered. At alanine 2 the chain carries N-acetylalanine. A required for cytoplasmic targeting region spans residues 2-77 (AEPLKEEDGE…VVSSARRRLT (76 aa)). The Protein kinase domain occupies 55–347 (YEIIETIGNG…AAAALRHPFL (293 aa)). ATP contacts are provided by residues 61–69 (IGNGAYGVV) and lysine 84. The tract at residues 78-139 (GQQVAIKKIP…FRSVYVVLDL (62 aa)) is required for binding to MAP2K5. The tract at residues 140 to 406 (MESDLHQIIH…QQIRFQPSLQ (267 aa)) is necessary for oligomerization. Aspartate 182 serves as the catalytic Proton acceptor. The short motif at 219–221 (TEY) is the TXY element. Positions 407–806 (PVASEPVCPD…LSDLPDLQEP (400 aa)) are may not be required for kinase activity; required to stimulate MEF2C activity. Disordered regions lie at residues 424–475 (APSG…SDNT) and 488–727 (RSRL…PKGS). Positions 433-443 (SPPPALPPCSG) are enriched in pro residues. Composition is skewed to basic and acidic residues over residues 502-519 (PEPR…EREE), 527-544 (RAKE…KERG), and 563-573 (DNDRSLLERWT). The short motif at 505-539 (RKPVTAQERQREREEKRRRRQERAKEREKRRQERE) is the Nuclear localization signal element. Pro residues-rich tracts occupy residues 578 to 592 (PPVP…PTPK) and 627 to 643 (VCPP…PVPA). Over residues 647-660 (TAPSTSLLASQSLV) the composition is skewed to polar residues. Positions 678 to 689 (PSGPPPPDPGLT) are enriched in pro residues. Positions 693–710 (STSESPDVNLVTQQLSKS) are enriched in polar residues. Serine 710 is subject to Phosphoserine. The residue at position 723 (threonine 723) is a Phosphothreonine.

The protein belongs to the protein kinase superfamily. CMGC Ser/Thr protein kinase family. MAP kinase subfamily. Interacts with MAP2K5. Forms oligomers. Interacts with MEF2A, MEF2C and MEF2D; the interaction phosphorylates the MEF2s and enhances transcriptional activity of MEF2A, MEF2C but not MEF2D. Interacts with SGK1. Interacts with PML. Interacts (via N-terminal half) with HSP90AB1-CDC37 chaperone complex in resting cells; the interaction is MAP2K5-independent and prevents MAPK7 from ubiquitination and proteasomal degradation. Interacts with STUB1/CHIP; the interaction is enhanced in the presence of IGF1 or MAP2K5 and promotes STUB1/CHIP E3 ligase activity. The cofactor is Mg(2+). In terms of processing, dually phosphorylated on Thr-219 and Tyr-221, which activates the enzyme.

It is found in the cytoplasm. It localises to the nucleus. The protein localises to the PML body. The enzyme catalyses L-seryl-[protein] + ATP = O-phospho-L-seryl-[protein] + ADP + H(+). The catalysed reaction is L-threonyl-[protein] + ATP = O-phospho-L-threonyl-[protein] + ADP + H(+). Its activity is regulated as follows. Activated by tyrosine and threonine phosphorylation. Activated in response to hyperosmolarity, hydrogen peroxide, and epidermal growth factor (EGF). Functionally, plays a role in various cellular processes such as proliferation, differentiation and cell survival. The upstream activator of MAPK7 is the MAPK kinase MAP2K5. Upon activation, it translocates to the nucleus and phosphorylates various downstream targets including MEF2C. EGF activates MAPK7 through a Ras-independent and MAP2K5-dependent pathway. As part of the MAPK/ERK signaling pathway, acts as a negative regulator of apoptosis in cardiomyocytes via interaction with STUB1/CHIP and promotion of STUB1-mediated ubiquitination and degradation of ICER-type isoforms of CREM. May have a role in muscle cell differentiation. May be important for endothelial function and maintenance of blood vessel integrity. MAP2K5 and MAPK7 interact specifically with one another and not with MEK1/ERK1 or MEK2/ERK2 pathways. Phosphorylates SGK1 at Ser-78 and this is required for growth factor-induced cell cycle progression. Involved in the regulation of p53/TP53 by disrupting the PML-MDM2 interaction. This chain is Mitogen-activated protein kinase 7 (Mapk7), found in Rattus norvegicus (Rat).